Reading from the N-terminus, the 569-residue chain is Atlastin-2 (569 aa).

The interval 1–49 (MAEGGSLRNRTRFGSRSNEAMNHVDYPDENFVEEIQLNSDTEVMEKPRP) is N-terminal hypervariable region (HVR). Residues 1 to 464 (MAEGGSLRNR…NIFYAARTPA (464 aa)) lie on the Cytoplasmic side of the membrane. Residues 80 to 324 (DLNVVVLSVA…LVPLLLAPEN (245 aa)) form the GB1/RHD3-type G domain. Positions 93, 94, 95, 96, 97, 98, 163, 232, and 233 each coordinate GDP. Residues R93, K94, G95, K96, S97, and F98 each contribute to the GTP site. S97 contributes to the Mg(2+) binding site. 2 residues coordinate GTP: R232 and D233. Positions 244-272 (LEGGNKFLEKRLQVKQNQHEELQNVRKHI) form a coiled coil. GDP contacts are provided by V291 and N294. V291 contacts GTP. A 3HB (three-helix bundle) domain region spans residues 362–453 (MLQATAEANN…YANFLKHNDG (92 aa)). The tract at residues 454–462 (KNIFYAART) is linker. Residues 465–485 (TLFAVMFAMYIISGLTGFIGM) form a helical membrane-spanning segment. The Lumenal portion of the chain corresponds to 486-487 (NS). A helical transmembrane segment spans residues 488–508 (IATICNLIMGLTLLSFCTWAY). Over 509–569 (VKYSGEFREL…DQVSGRLKTN (61 aa)) the chain is Cytoplasmic. The tract at residues 535–569 (KPLSDNLMEDNIRQTVRNSIKAGLTDQVSGRLKTN) is autoinhibitory domain.

Belongs to the TRAFAC class dynamin-like GTPase superfamily. GB1/RHD3 GTPase family. GB1 subfamily. As to quaternary structure, monomeric and homodimeric. The homodimer, transiently formed by two molecules on opposing membranes, is the active form mediating ER membrane fusion.

The protein localises to the endoplasmic reticulum membrane. The enzyme catalyses GTP + H2O = GDP + phosphate + H(+). Its function is as follows. Atlastin-2 (ATL2) is a membrane-anchored GTPase that mediates the GTP-dependent fusion of endoplasmic reticulum (ER) membranes, maintaining the continuous ER network. It facilitates the formation of three-way junctions where ER tubules intersect. Two atlastin-2 on neighboring ER tubules bind GTP and form loose homodimers through the GB1/RHD3-type G domains and 3HB regions. Upon GTP hydrolysis, the 3HB regions tighten, pulling the membranes together to drive their fusion. After fusion, the homodimer disassembles upon release of inorganic phosphate (Pi). Subsequently, GDP dissociates, resetting the monomers to a conformation ready for a new fusion cycle. The sequence is that of Atlastin-2 (atl2) from Xenopus laevis (African clawed frog).